Here is a 474-residue protein sequence, read N- to C-terminus: MKDTIVLYPNLGRGHLVSMVELGKLILTHHPSLSITILILTPPTTPSTTTTTLACDSNAQYIATVTATTPSITFHRVPLAALPFNTPFLPPHLLSLELTRHSTQNIAVALQTLAKASNLKAIVIDFMNFNDPKALTENLNNNVPTYFYYTSGASTLALLLYYPTIHPTLIEKKDTDQPLQIQIPGLSTITADDFPNECKDPLSYACQVFLQIAETMMGGAGIIVNTFEAIEEEAIRALSEDATVPPPLFCVGPVISAPYGEEDKGCLSWLNLQPSQSVVLLCFGSMGRFSRAQLKEIAIGLEKSEQRFLWVVRTELGGADDSAEELSLDELLPEGFLERTKEKGMVVRDWAPQAAILSHDSVGGFVTHCGWNSVLEAVCEGVPMVAWPLYAEQKMNRMVMVKEMKVALAVNENKDGFVSSTELGDRVRELMESDKGKEIRQRIFKMKMSAAEAMAEGGTSRASLDKLAKLWKQS.

Residues 1–49 constitute a propeptide, removed in mature form; it reads MKDTIVLYPNLGRGHLVSMVELGKLILTHHPSLSITILILTPPTTPSTT. The active-site Proton acceptor is His15. Position 15 (His15) interacts with an anthocyanidin. Residue Asp125 is the Charge relay of the active site. Residues Thr150, Ala351, Gln353, His368, Trp371, Asn372, Ser373, and Glu376 each coordinate UDP-alpha-D-glucose. Ala391 is an an anthocyanidin binding site. UDP-alpha-D-glucose-binding residues include Glu392 and Gln393.

It belongs to the UDP-glycosyltransferase family. As to quaternary structure, monomer. Expressed in shoots, leaves, cotyledons, epicotyls, hypocotyls, roots, pods, seeds and flowers.

The catalysed reaction is a 7-hydroxyisoflavone + UDP-alpha-D-glucose = a 7-hydroxyisoflavone 7-O-beta-D-glucoside + UDP + H(+). Involved in the biosynthesis of isoflavonoids. Specific for UDP-glucose. Can use genistein &gt; daidzein &gt; formononetin &gt; quercetin &gt; kaempferol &gt; 4,2',4',6'-tetrahydroxychalcone &gt; apigenin &gt; aureusidin &gt; esculetin &gt; naringenin as substrates, but not cyanidin, trans-p-coumaric acid, caffeic acid, benzoic acid, m- and p-hydroxybenzoic acids, salicylic acid, salicyl alcohol, and hydroquinone. The chain is Isoflavone 7-O-glucosyltransferase 1 (GmIF7GT1) from Glycine max (Soybean).